A 353-amino-acid polypeptide reads, in one-letter code: Photosystem II protein D1 (353 aa).

Threonine 2 is modified (N-acetylthreonine). A Phosphothreonine modification is found at threonine 2. The next 3 membrane-spanning stretches (helical) occupy residues 29 to 46 (YIGW…TATS), 118 to 133 (HFLL…EWEL), and 142 to 156 (WIAV…AATA). Position 118 (histidine 118) interacts with chlorophyll a. Tyrosine 126 lines the pheophytin a pocket. Positions 170 and 189 each coordinate [CaMn4O5] cluster. Residues 197–218 (FHMLGVAGVFGGSLFSAMHGSL) form a helical membrane-spanning segment. A chlorophyll a-binding site is contributed by histidine 198. A quinone contacts are provided by residues histidine 215 and 264–265 (SF). Histidine 215 is a Fe cation binding site. Histidine 272 contributes to the Fe cation binding site. Residues 274 to 288 (FLAAWPVVGIWFTAL) traverse the membrane as a helical segment. The [CaMn4O5] cluster site is built by histidine 332, glutamate 333, aspartate 342, and alanine 344. Residues 345–353 (AVESPSING) constitute a propeptide that is removed on maturation.

The protein belongs to the reaction center PufL/M/PsbA/D family. PSII is composed of 1 copy each of membrane proteins PsbA, PsbB, PsbC, PsbD, PsbE, PsbF, PsbH, PsbI, PsbJ, PsbK, PsbL, PsbM, PsbT, PsbX, PsbY, PsbZ, Psb30/Ycf12, at least 3 peripheral proteins of the oxygen-evolving complex and a large number of cofactors. It forms dimeric complexes. Requires The D1/D2 heterodimer binds P680, chlorophylls that are the primary electron donor of PSII, and subsequent electron acceptors. It shares a non-heme iron and each subunit binds pheophytin, quinone, additional chlorophylls, carotenoids and lipids. D1 provides most of the ligands for the Mn4-Ca-O5 cluster of the oxygen-evolving complex (OEC). There is also a Cl(-1) ion associated with D1 and D2, which is required for oxygen evolution. The PSII complex binds additional chlorophylls, carotenoids and specific lipids. as cofactor. In terms of processing, tyr-161 forms a radical intermediate that is referred to as redox-active TyrZ, YZ or Y-Z. Post-translationally, C-terminally processed by CTPA; processing is essential to allow assembly of the oxygen-evolving complex and thus photosynthetic growth.

Its subcellular location is the plastid. It is found in the chloroplast thylakoid membrane. The enzyme catalyses 2 a plastoquinone + 4 hnu + 2 H2O = 2 a plastoquinol + O2. In terms of biological role, photosystem II (PSII) is a light-driven water:plastoquinone oxidoreductase that uses light energy to abstract electrons from H(2)O, generating O(2) and a proton gradient subsequently used for ATP formation. It consists of a core antenna complex that captures photons, and an electron transfer chain that converts photonic excitation into a charge separation. The D1/D2 (PsbA/PsbD) reaction center heterodimer binds P680, the primary electron donor of PSII as well as several subsequent electron acceptors. The protein is Photosystem II protein D1 of Sinapis alba (White mustard).